Here is a 1637-residue protein sequence, read N- to C-terminus: Probable serine/threonine-protein kinase gdt2 (1637 aa).

Positions 1–19 are cleaved as a signal peptide; sequence MNYILYILLILIIFSINNT. The Extracellular segment spans residues 20 to 896; that stretch reads FSIGSFVYTP…IPVEKINLLP (877 aa). A helical membrane pass occupies residues 897–917; the sequence is IIVPICVTVLVLLSILIVFFG. Over 918 to 1637 the chain is Cytoplasmic; the sequence is ARYYKHKKRR…NNNNNNNNNN (720 aa). The span at 977 to 990 shows a compositional bias: polar residues; the sequence is SDIQTQSENNNLEP. The tract at residues 977-1000 is disordered; sequence SDIQTQSENNNLEPTTVETTTTTT. Low complexity predominate over residues 991–1000; the sequence is TTVETTTTTT. The Protein kinase domain occupies 1290 to 1547; it reads IIIKNYISEG…LSKYLKHLLK (258 aa). ATP-binding positions include 1296-1304 and Lys1317; that span reads ISEGTFGIV. Asp1408 functions as the Proton acceptor in the catalytic mechanism. Residues 1557–1637 are disordered; it reads DKDKKNKKKN…NNNNNNNNNN (81 aa). Low complexity-rich tracts occupy residues 1568–1589 and 1597–1637; these read NNNNNNNNNNNNNNNNNNNNNN and NNNI…NNNN.

This sequence in the N-terminal section; belongs to the GDT family. It in the C-terminal section; belongs to the protein kinase superfamily. TKL Ser/Thr protein kinase family.

It localises to the membrane. It catalyses the reaction L-seryl-[protein] + ATP = O-phospho-L-seryl-[protein] + ADP + H(+). It carries out the reaction L-threonyl-[protein] + ATP = O-phospho-L-threonyl-[protein] + ADP + H(+). In terms of biological role, regulates the transition between growth and differentiation. The protein is Probable serine/threonine-protein kinase gdt2 (gdt2) of Dictyostelium discoideum (Social amoeba).